Consider the following 422-residue polypeptide: Histone deacetylase B (422 aa).

Aspartate 102 lines the substrate pocket. The active-site Proton acceptor is the histidine 144. Glycine 152 lines the substrate pocket. A divalent metal cation is bound by residues aspartate 179, histidine 181, and aspartate 268. Residue tyrosine 307 coordinates substrate. Residues 399–422 (IDFDRDEDSKENMDKRKKKHNDFS) are disordered. The span at 413-422 (KRKKKHNDFS) shows a compositional bias: basic residues.

Belongs to the histone deacetylase family. HD type 1 subfamily.

It localises to the nucleus. The protein resides in the cytoplasm. The enzyme catalyses N(6)-acetyl-L-lysyl-[histone] + H2O = L-lysyl-[histone] + acetate. With respect to regulation, its activity is inhibited by trichostatin A (TSA), a well known histone deacetylase inhibitor. Cytosolic activity is refractory to inhibition by TSA, while the nuclear activity is inhibited completely. Its function is as follows. Responsible for the deacetylation of lysine residues on the N-terminal part of the core histones (H2A, H2B, H3 and H4). Histone deacetylation plays an important role in transcriptional regulation, cell cycle progression and developmental events. Histone deacetylases act via the formation of large multiprotein complexes. May play a role in the regulation of the timing of gene expression during the development and in the definition aspects of the phenotype that mediate social behavior in genetically heterogeneous groups. The protein is Histone deacetylase B (hdaB) of Dictyostelium discoideum (Social amoeba).